The chain runs to 783 residues: Polyadenylate-binding protein, cytoplasmic and nuclear (783 aa).

Positions 16 to 65 are disordered; that stretch reads DLGNTSLGGGDNRAAPAINTNVAPGEYQTADPDTAGPTPSSAAPHPQSSA. Residues 54–65 are compositionally biased toward low complexity; sequence PSSAAPHPQSSA. 4 RRM domains span residues 65–143, 153–230, 246–323, and 349–471; these read ASLY…WSQR, GNVF…YHIP, TNIY…RAQK, and VNLY…LAQR. Disordered stretches follow at residues 381–428, 596–671, and 752–783; these read MRDA…KGDR, AAAL…AAGG, and VKSQQGPGQGPAPTQGEAEAEKPKEEKAEEKA. Over residues 396-406 the composition is skewed to basic and acidic residues; the sequence is GKDKENKKEGE. Over residues 407–416 the composition is skewed to acidic residues; the sequence is QAAEAEGEAE. The segment covering 417-428 has biased composition (basic and acidic residues); sequence GAEKKTEKKGDR. The span at 601–614 shows a compositional bias: gly residues; sequence NGRGGPGGPGGRGM. Low complexity predominate over residues 630–641; the sequence is AGFPPNGRPQNG. Gly residues predominate over residues 642 to 655; that stretch reads NMGGRGGPGRGGNF. Residues 656–671 show a composition bias toward low complexity; that stretch reads AAGRGAPPAGPLAAGG. A PABC domain is found at 676–753; the sequence is SSLLQSQLTA…AMAVYDEYVK (78 aa). Over residues 770-783 the composition is skewed to basic and acidic residues; the sequence is EAEKPKEEKAEEKA.

This sequence belongs to the polyadenylate-binding protein type-1 family.

It is found in the cytoplasm. The protein localises to the nucleus. Functionally, binds the poly(A) tail of mRNA. Appears to be an important mediator of the multiple roles of the poly(A) tail in mRNA biogenesis, stability and translation. In the nucleus, involved in both mRNA cleavage and polyadenylation. Is also required for efficient mRNA export to the cytoplasm. Acts in concert with a poly(A)-specific nuclease (PAN) to affect poly(A) tail shortening, which may occur concomitantly with either nucleocytoplasmic mRNA transport or translational initiation. In the cytoplasm, stimulates translation initiation and regulates mRNA decay through translation termination-coupled poly(A) shortening, probably mediated by PAN. This is Polyadenylate-binding protein, cytoplasmic and nuclear (PAB1) from Chaetomium globosum (strain ATCC 6205 / CBS 148.51 / DSM 1962 / NBRC 6347 / NRRL 1970) (Soil fungus).